The following is a 382-amino-acid chain: 1-deoxy-D-xylulose 5-phosphate reductoisomerase (382 aa).

Positions 10, 11, 12, 13, 36, and 122 each coordinate NADPH. A 1-deoxy-D-xylulose 5-phosphate-binding site is contributed by lysine 123. Glutamate 124 contributes to the NADPH binding site. Residue aspartate 148 coordinates Mn(2+). Serine 149, glutamate 150, serine 174, and histidine 197 together coordinate 1-deoxy-D-xylulose 5-phosphate. Glutamate 150 contributes to the Mn(2+) binding site. Glycine 203 is an NADPH binding site. 1-deoxy-D-xylulose 5-phosphate-binding residues include serine 210, asparagine 215, lysine 216, and glutamate 219. Residue glutamate 219 coordinates Mn(2+).

The protein belongs to the DXR family. Mg(2+) serves as cofactor. The cofactor is Mn(2+).

The catalysed reaction is 2-C-methyl-D-erythritol 4-phosphate + NADP(+) = 1-deoxy-D-xylulose 5-phosphate + NADPH + H(+). It participates in isoprenoid biosynthesis; isopentenyl diphosphate biosynthesis via DXP pathway; isopentenyl diphosphate from 1-deoxy-D-xylulose 5-phosphate: step 1/6. Catalyzes the NADPH-dependent rearrangement and reduction of 1-deoxy-D-xylulose-5-phosphate (DXP) to 2-C-methyl-D-erythritol 4-phosphate (MEP). The chain is 1-deoxy-D-xylulose 5-phosphate reductoisomerase from Chlorobium chlorochromatii (strain CaD3).